Reading from the N-terminus, the 671-residue chain is Kinesin-like protein KIF2C (671 aa).

Residues 1 to 200 (MIDFDDVAAI…CHPLTMTDPI (200 aa)) form a globular region. A disordered region spans residues 36-62 (KQKRRSVNSKIPAPKESLRTRSTRMST). S41 is subject to Phosphoserine; by AURKB. The short motif at 44–47 (SKIP) is the Microtubule tip localization signal element. 7 positions are modified to phosphoserine: S52, S57, S61, S112, S121, S133, and S138. Residues 153-184 (EKKAQNSEMRMKRAQEYDSSFPNWEFARMIKE) are negative regulator of microtubule-binding. 2 cysteine pairs are disulfide-bonded: C191–C233 and C290–C506. Positions 204 to 534 (RICVCVRKRP…LRYADRVKEL (331 aa)) constitute a Kinesin motor domain. Residue 294-301 (GQTGSGKT) coordinates ATP. Residues S465, S567, and S579 each carry the phosphoserine modification. The stretch at 564–604 (GNLSKEEEELSSQMSSFNEAMTQIRELEERAVEELKEIIQQ) forms a coiled coil.

The protein belongs to the TRAFAC class myosin-kinesin ATPase superfamily. Kinesin family. MCAK/KIF2 subfamily. In terms of assembly, interacts with CENPH. Interacts with MTUS2/TIP150; the interaction is direct. Interacts with MAPRE1; the interaction is direct, regulated by phosphorylation and is probably required for targeting to growing microtubule plus ends. Interacts with KIF18B at microtubule tips; this interaction increases the affinity of both partners for microtubule plus ends and is required for robust microtubule depolymerization. Phosphorylation by AURKA or AURKB strongly reduces KIF18B-binding. Post-translationally, phosphorylation by AURKB, regulates association with centromeres and kinetochores and the microtubule depolymerization activity. Ubiquitinated.

Its subcellular location is the cytoplasm. It is found in the cytoskeleton. It localises to the nucleus. The protein localises to the chromosome. The protein resides in the centromere. Its subcellular location is the kinetochore. Its function is as follows. In complex with KIF18B, constitutes the major microtubule plus-end depolymerizing activity in mitotic cells. Regulates the turnover of microtubules at the kinetochore and functions in chromosome segregation during mitosis. Plays a role in chromosome congression and is required for the lateral to end-on conversion of the chromosome-microtubule attachment. This is Kinesin-like protein KIF2C (KIF2C) from Macaca fascicularis (Crab-eating macaque).